The primary structure comprises 525 residues: MTVLTDFLATHQLLTILIVLASGALLGQIKFGPLRFGAAGALFMGLVVGALDPRFGQNLGMIKGLGVVLFCYTVGLAAGSTFLSDLKRQWGLMLAGVVGLAVMAAAGLGLGRLFGLTPAHVAGLYAGVLTSPAIDAASMATHGAADTLVGYALSYPVGVVVGLIMVAIIAKRCWPASKDNTSMAEAGLTAVSTVVDRETSIRQTPGFNDDQVRMSYLLRDGEMRLATPDDDLHVGDQVLVVGNPDDVNRAVEHLGHVSERTLTNERNELDFRRFVVSNPALVGRTLGSIDVRGRTSGKVTRVRRGDLDMLARSDIVLQPGDRVLCVVPAHRLSDAADLFGDSEARVSQVDALSLGLGAALGLLLGALMVALPRGLQFELGTAAGPLVMGMILGSIHRTGPLRWQLPHATNAILRQLGLMIFLACVGLASGPAFLSQAVSGTGLAVIAVSAVTLVLGGAIVIAAAWCMKLSAQRATGAFAGFVGQPAILSYANSLVNDERIESAYGALFALGTVVKILLVQVIVLV.

The next 6 membrane-spanning stretches (helical) occupy residues 7 to 29 (FLAT…LGQI), 34 to 51 (LRFG…VGAL), 64 to 82 (GLGV…GSTF), 92 to 114 (LMLA…GRLF), 121 to 143 (VAGL…ATHG), and 148 to 170 (LVGY…AIIA). RCK C-terminal domains follow at residues 178–257 (KDNT…LGHV) and 259–341 (ERTL…LFGD). 5 consecutive transmembrane segments (helical) span residues 351–370 (ALSL…LMVA), 374–396 (GLQF…GSIH), 416–438 (LGLM…SQAV), 443–465 (LAVI…AAAW), and 502–524 (SAYG…VIVL).

It belongs to the AAE transporter (TC 2.A.81) family.

It localises to the cell membrane. This is an uncharacterized protein from Cutibacterium acnes (strain DSM 16379 / KPA171202) (Propionibacterium acnes).